The primary structure comprises 226 residues: tRNA (guanine-N(1)-)-methyltransferase (226 aa).

S-adenosyl-L-methionine is bound by residues Gly-110 and 129-134; that span reads IGDYIL.

This sequence belongs to the RNA methyltransferase TrmD family. Homodimer.

It localises to the cytoplasm. The catalysed reaction is guanosine(37) in tRNA + S-adenosyl-L-methionine = N(1)-methylguanosine(37) in tRNA + S-adenosyl-L-homocysteine + H(+). Functionally, specifically methylates guanosine-37 in various tRNAs. This is tRNA (guanine-N(1)-)-methyltransferase from Malacoplasma penetrans (strain HF-2) (Mycoplasma penetrans).